Reading from the N-terminus, the 319-residue chain is Protease HtpX homolog (319 aa).

2 helical membrane passes run 3-23 (LTVLALIGGYIVVLGVAAWAL) and 32-52 (TGVAFMLSLLALAMVLVQWLF). His134 contacts Zn(2+). The active site involves Glu135. A Zn(2+)-binding site is contributed by His138. The next 2 helical transmembrane spans lie at 146-166 (VILALSLIPIAAFLIGRTLVW) and 182-202 (MALVAVGAALLAAGMVFQLIV). Glu210 serves as a coordination point for Zn(2+).

It belongs to the peptidase M48B family. Requires Zn(2+) as cofactor.

The protein resides in the cell membrane. In Aeropyrum pernix (strain ATCC 700893 / DSM 11879 / JCM 9820 / NBRC 100138 / K1), this protein is Protease HtpX homolog.